The sequence spans 356 residues: Histidinol-phosphate aminotransferase (356 aa).

K214 carries the N6-(pyridoxal phosphate)lysine modification.

Belongs to the class-II pyridoxal-phosphate-dependent aminotransferase family. Histidinol-phosphate aminotransferase subfamily. In terms of assembly, homodimer. Pyridoxal 5'-phosphate serves as cofactor.

It carries out the reaction L-histidinol phosphate + 2-oxoglutarate = 3-(imidazol-4-yl)-2-oxopropyl phosphate + L-glutamate. It participates in amino-acid biosynthesis; L-histidine biosynthesis; L-histidine from 5-phospho-alpha-D-ribose 1-diphosphate: step 7/9. The chain is Histidinol-phosphate aminotransferase from Shigella boydii serotype 18 (strain CDC 3083-94 / BS512).